The following is an 803-amino-acid chain: Nuclear factor of activated T-cells, cytoplasmic 1 (803 aa).

The interval 101–106 (PRIEIT) is calcineurin-binding. Positions 109–199 (LGLHHNSSQF…CVSPKTTDPE (91 aa)) are transactivation domain A (TAD-A). Residues 181–195 (PQTSPWQSPCVSPKT) are compositionally biased toward polar residues. Residues 181 to 279 (PQTSPWQSPC…GSPRVSVTDD (99 aa)) form a disordered region. Tandem repeats lie at residues 184 to 200 (SPWQ…DPEE) and 214 to 230 (SPRH…VTEE). Residues 184 to 279 (SPWQSPCVSP…GSPRVSVTDD (96 aa)) form a 3 X SP repeats region. A phosphoserine mark is found at Ser214 and Ser218. Residues 214–231 (SPRHSPSTSPRTSVTEES) show a composition bias toward low complexity. Residue Ser226 is modified to Phosphoserine; by PKA. The Nuclear localization signal motif lies at 246–248 (KRK). Repeat unit 3 spans residues 263-279 (SPTPSPQGSPRVSVTDD). Ser275 carries the post-translational modification Phosphoserine; by PKA. The Nuclear export signal motif lies at 291-302 (SAIVAAINALST). One can recognise an RHD domain in the interval 389 to 571 (PSLPALDWQL…NPIECSQRSA (183 aa)). The DNA-binding element occupies 418–425 (RAHYETEG). Positions 661-663 (KRK) match the Nuclear localization signal motif. The tract at residues 723 to 803 (LMPGFPPRPQ…QPQVSPTSSG (81 aa)) is disordered. Residues 778 to 792 (SGVPPGPPQPPPPTL) are compositionally biased toward pro residues. A compositionally biased stretch (low complexity) spans 793-803 (LQPQVSPTSSG).

In terms of assembly, member of the multicomponent NFATC transcription complex that consists of at least two components, a pre-existing cytoplasmic component NFATC2 and an inducible nuclear component NFATC1. Other members such as NFATC4, NFATC3 or members of the activating protein-1 family, MAF, GATA4 and Cbp/p300 can also bind the complex. NFATC proteins bind to DNA as monomers. Interacts with HOMER2 and HOMER3; this interaction may compete with calcineurin/PPP3CA-binding and hence prevent NFATC1 dephosphorylation and activation. Interacts with TLE6/GRG6. Phosphorylated by NFATC-kinase and GSK3B; phosphorylation induces NFATC1 nuclear exit and dephosphorylation by calcineurin promotes nuclear import. Phosphorylation by PKA and DYRK2 negatively modulates nuclear accumulation, and promotes subsequent phosphorylation by GSK3B or casein kinase 1.

The protein localises to the cytoplasm. The protein resides in the nucleus. In terms of biological role, plays a role in the inducible expression of cytokine genes in T-cells, especially in the induction of the IL-2 or IL-4 gene transcription. Also controls gene expression in embryonic cardiac cells. Could regulate not only the activation and proliferation but also the differentiation and programmed death of T-lymphocytes as well as lymphoid and non-lymphoid cells. Required for osteoclastogenesis and regulates many genes important for osteoclast differentiation and function. This Bos taurus (Bovine) protein is Nuclear factor of activated T-cells, cytoplasmic 1.